The sequence spans 165 residues: Nucleotide-binding protein A9601_05361 (165 aa).

It belongs to the YajQ family.

Functionally, nucleotide-binding protein. This is Nucleotide-binding protein A9601_05361 from Prochlorococcus marinus (strain AS9601).